A 200-amino-acid polypeptide reads, in one-letter code: uncharacterized protein (200 aa).

Belongs to the HAD-like hydrolase superfamily. CbbY/CbbZ/Gph/YieH family.

This is an uncharacterized protein from Haemophilus influenzae (strain ATCC 51907 / DSM 11121 / KW20 / Rd).